Consider the following 158-residue polypeptide: NAD(P)H-quinone oxidoreductase subunit J, chloroplastic (158 aa).

It belongs to the complex I 30 kDa subunit family. In terms of assembly, NDH is composed of at least 16 different subunits, 5 of which are encoded in the nucleus.

The protein resides in the plastid. Its subcellular location is the chloroplast thylakoid membrane. The enzyme catalyses a plastoquinone + NADH + (n+1) H(+)(in) = a plastoquinol + NAD(+) + n H(+)(out). It catalyses the reaction a plastoquinone + NADPH + (n+1) H(+)(in) = a plastoquinol + NADP(+) + n H(+)(out). Its function is as follows. NDH shuttles electrons from NAD(P)H:plastoquinone, via FMN and iron-sulfur (Fe-S) centers, to quinones in the photosynthetic chain and possibly in a chloroplast respiratory chain. The immediate electron acceptor for the enzyme in this species is believed to be plastoquinone. Couples the redox reaction to proton translocation, and thus conserves the redox energy in a proton gradient. In Fagopyrum esculentum subsp. ancestrale (Wild buckwheat), this protein is NAD(P)H-quinone oxidoreductase subunit J, chloroplastic.